Consider the following 462-residue polypeptide: Lipase A (462 aa).

The first 21 residues, 1 to 21, serve as a signal peptide directing secretion; the sequence is MRVSLRSITSLLAAATAAVLA. An intrachain disulfide couples C122 to C294. Residues S205, D355, and H387 each act as charge relay system in the active site. A disulfide bond links C371 and C415.

Belongs to the AB hydrolase superfamily. Lipase family. In terms of assembly, monomer.

It localises to the secreted. It carries out the reaction a triacylglycerol + H2O = a diacylglycerol + a fatty acid + H(+). Its function is as follows. Hydrolyzes triglycerides, with a preference for substrates with short-chain lengths (C4 to C8). Has the highest activity with tributyrin (C4), followed by tricaproin (C6) and tricaprylin (C8). Can also hydrolyze vinylacetate (C2) and triolein (C18), but with lower efficiency. Has no activity with tripalmitin (C16). The chain is Lipase A from Moesziomyces aphidis (Pseudozyma aphidis).